A 349-amino-acid polypeptide reads, in one-letter code: ATPase GET3 (349 aa).

26-33 (KGGVGKTT) serves as a coordination point for ATP. The active site involves Asp-57. Positions 242 and 269 each coordinate ATP. Zn(2+) contacts are provided by Cys-281 and Cys-284.

This sequence belongs to the arsA ATPase family. As to quaternary structure, homodimer. Component of the Golgi to ER traffic (GET) complex, which is composed of GET1, GET2 and GET3. Within the complex, GET1 and GET2 form a heterotetramer which is stabilized by phosphatidylinositol binding and which binds to the GET3 homodimer. Interacts with the chloride channel protein GEF1.

The protein localises to the cytoplasm. It localises to the endoplasmic reticulum. Its subcellular location is the golgi apparatus. Functionally, ATPase required for the post-translational delivery of tail-anchored (TA) proteins to the endoplasmic reticulum. Recognizes and selectively binds the transmembrane domain of TA proteins in the cytosol. This complex then targets to the endoplasmic reticulum by membrane-bound receptors GET1 and GET2, where the tail-anchored protein is released for insertion. This process is regulated by ATP binding and hydrolysis. ATP binding drives the homodimer towards the closed dimer state, facilitating recognition of newly synthesized TA membrane proteins. ATP hydrolysis is required for insertion. Subsequently, the homodimer reverts towards the open dimer state, lowering its affinity for the GET1-GET2 receptor, and returning it to the cytosol to initiate a new round of targeting. Cooperates with the HDEL receptor ERD2 to mediate the ATP-dependent retrieval of resident ER proteins that contain a C-terminal H-D-E-L retention signal from the Golgi to the ER. Involved in low-level resistance to the oxyanions arsenite and arsenate, and in heat tolerance. The protein is ATPase GET3 of Lodderomyces elongisporus (strain ATCC 11503 / CBS 2605 / JCM 1781 / NBRC 1676 / NRRL YB-4239) (Yeast).